A 383-amino-acid polypeptide reads, in one-letter code: Serine protease 23 (383 aa).

The N-terminal stretch at 1–19 (MAGIPGLLFLLFFLLCAVG) is a signal peptide. Asn-93 carries N-linked (GlcNAc...) asparagine glycosylation. Ser-109 carries the phosphoserine; by FAM20C modification. A disulfide bridge links Cys-160 with Cys-176. The active-site Charge relay system is the His-175. A glycan (N-linked (GlcNAc...) asparagine) is linked at Asn-207. Active-site charge relay system residues include Asp-240 and Ser-316.

It belongs to the peptidase S1 family.

The protein resides in the secreted. The protein is Serine protease 23 (PRSS23) of Homo sapiens (Human).